The primary structure comprises 303 residues: Taste receptor type 2 member 2 (303 aa).

Residues 1-10 (MALSFSAILH) lie on the Extracellular side of the membrane. A helical transmembrane segment spans residues 11 to 31 (IIMMSAEFFTGITVNGFLIIV). Residues 32–56 (NCNELIKHRKLMPIQILLMCIGMSR) are Cytoplasmic-facing. Residues 57-77 (FGLQMVLMVQSFFSVFFPLLY) form a helical membrane-spanning segment. Topologically, residues 78-79 (VK) are extracellular. A helical transmembrane segment spans residues 80-100 (IIYGAAMMFLWMFFSSISLWF). At 101-102 (AT) the chain is on the cytoplasmic side. A helical membrane pass occupies residues 103–123 (CLSVFYCLKISGFTQSCFLWL). Topologically, residues 124-129 (KFRIPK) are extracellular. The helical transmembrane segment at 130–150 (LIPWLLLGSVLASVSIASVCI) threads the bilayer. Residues 151-185 (EVDYAKNVEEDALRNTTLKKSKTKIKKISEVLLVN) lie on the Cytoplasmic side of the membrane. A helical membrane pass occupies residues 186–206 (LALIFPLAIFVMCTSMLLISL). The Extracellular portion of the chain corresponds to 207-234 (YKHTHRMQHGSHGFRNANTEAHINALKT). A helical transmembrane segment spans residues 235–255 (VITFFCFFISYFAAFMTNMTF). Over 256 to 277 (SLPYRSHQFFMLKDIMAAYPSG) the chain is Cytoplasmic.

It belongs to the G-protein coupled receptor T2R family.

The protein localises to the cell membrane. Functionally, bitter taste receptor that detects natural and synthetic bitter compounds. The protein is Taste receptor type 2 member 2 of Homo sapiens (Human).